A 479-amino-acid polypeptide reads, in one-letter code: Bifunctional aspartate aminotransferase and glutamate/aspartate-prephenate aminotransferase (479 aa).

A chloroplast-targeting transit peptide spans 1–79; it reads MAATTTTSSS…VEVDISLSPR (79 aa). Position 111 (G111) interacts with L-aspartate. Position 172–173 (172–173) interacts with pyridoxal 5'-phosphate; the sequence is AK. L-aspartate is bound by residues W197 and N247. Residues N247, Y279, and 307–309 contribute to the pyridoxal 5'-phosphate site; that span reads GFS. Residue K310 is modified to N6-(pyridoxal phosphate)lysine. Pyridoxal 5'-phosphate is bound at residue R318. R449 contributes to the L-aspartate binding site.

The protein belongs to the class-I pyridoxal-phosphate-dependent aminotransferase family. Homodimer. Pyridoxal 5'-phosphate serves as cofactor. As to expression, expressed in flowers, pistils, stamens, ovaries and at lower levels in leaves and sepals.

It localises to the plastid. Its subcellular location is the chloroplast. The catalysed reaction is L-aspartate + 2-oxoglutarate = oxaloacetate + L-glutamate. It carries out the reaction L-arogenate + oxaloacetate = prephenate + L-aspartate. It catalyses the reaction L-arogenate + 2-oxoglutarate = prephenate + L-glutamate. It functions in the pathway amino-acid biosynthesis; L-phenylalanine biosynthesis; L-arogenate from prephenate (L-Asp route): step 1/1. Its pathway is amino-acid biosynthesis; L-phenylalanine biosynthesis; L-arogenate from prephenate (L-Glu route): step 1/1. Prokaryotic-type aspartate aminotransferase. Also has a prenate transaminase activity. Involved in the aromatic amino acids biosynthesis pathway via the arogenate route. Required for the transamination of prephenate into arogenate. Can use 2-oxoglutarate, oxaloacetate and prephenate as substrates, but not phenylpyruvate or 4-hydroxyphenylpyruvate. The polypeptide is Bifunctional aspartate aminotransferase and glutamate/aspartate-prephenate aminotransferase (Petunia hybrida (Petunia)).